Here is a 150-residue protein sequence, read N- to C-terminus: Protein Smg homolog (150 aa).

The protein belongs to the Smg family.

In Methylibium petroleiphilum (strain ATCC BAA-1232 / LMG 22953 / PM1), this protein is Protein Smg homolog.